The primary structure comprises 287 residues: Elongation factor Ts (287 aa).

The involved in Mg(2+) ion dislocation from EF-Tu stretch occupies residues Thr-80–Leu-83.

The protein belongs to the EF-Ts family.

It localises to the cytoplasm. Functionally, associates with the EF-Tu.GDP complex and induces the exchange of GDP to GTP. It remains bound to the aminoacyl-tRNA.EF-Tu.GTP complex up to the GTP hydrolysis stage on the ribosome. The polypeptide is Elongation factor Ts (Pseudomonas putida (strain ATCC 700007 / DSM 6899 / JCM 31910 / BCRC 17059 / LMG 24140 / F1)).